The sequence spans 305 residues: Glycine--tRNA ligase alpha subunit (305 aa).

This sequence belongs to the class-II aminoacyl-tRNA synthetase family. As to quaternary structure, tetramer of two alpha and two beta subunits.

The protein resides in the cytoplasm. The enzyme catalyses tRNA(Gly) + glycine + ATP = glycyl-tRNA(Gly) + AMP + diphosphate. This chain is Glycine--tRNA ligase alpha subunit, found in Streptococcus suis (strain 98HAH33).